Consider the following 474-residue polypeptide: MTTPSTSNAPKTLYQKVWDAHVVATPEGEAPIIYVDRHLVHEVTSPQAFSGLKVAGRKLRAPEKTFATMDHNTSTRSASLDALSPMARTQVETLAQNCKDFGVRLYDIHHPNQGIVHVMGPELGITLPGTVIVCGDSHTATHGAFGALAFGIGTSEVEHVLATQTLRQLKAKTMKIEVRGQVTDGVTAKDIVLAIIGKIGMDGGTGYVVEFCGEAIEALSMEGRMTVCNMAIEMGAKAGMVAPDQTTFDYLEGREFAPKGEDWAEAVAAWKALKTDVGAEFDATVVLDAANIAPQLTWGTNPGQVVAIDAPVPNPADEANPTIRASMEKALDYIGLTAGTPMTDVAINKVFIGSCTNSRIEDLRSAAKQAKGRKVASGVTAIVVPGSGQVKAQAEAEGLDKIFIEAGFEWRLPGCSMCLAMNDDRLEAGDRCASTSNRNFEGRQGRGSRTHLVSPAMAAAAAIAGHFVDIRKPY.

[4Fe-4S] cluster-binding residues include C355, C415, and C418.

The protein belongs to the aconitase/IPM isomerase family. LeuC type 1 subfamily. As to quaternary structure, heterodimer of LeuC and LeuD. [4Fe-4S] cluster serves as cofactor.

It catalyses the reaction (2R,3S)-3-isopropylmalate = (2S)-2-isopropylmalate. It functions in the pathway amino-acid biosynthesis; L-leucine biosynthesis; L-leucine from 3-methyl-2-oxobutanoate: step 2/4. Its function is as follows. Catalyzes the isomerization between 2-isopropylmalate and 3-isopropylmalate, via the formation of 2-isopropylmaleate. This Shewanella sp. (strain ANA-3) protein is 3-isopropylmalate dehydratase large subunit.